A 357-amino-acid chain; its full sequence is Fructose-bisphosphate aldolase, cytoplasmic isozyme (357 aa).

Substrate-binding residues include arginine 53 and lysine 142. Glutamate 183 acts as the Proton acceptor in catalysis. Residue lysine 225 is the Schiff-base intermediate with dihydroxyacetone-P of the active site.

It belongs to the class I fructose-bisphosphate aldolase family.

It is found in the cytoplasm. It carries out the reaction beta-D-fructose 1,6-bisphosphate = D-glyceraldehyde 3-phosphate + dihydroxyacetone phosphate. The protein operates within carbohydrate degradation; glycolysis; D-glyceraldehyde 3-phosphate and glycerone phosphate from D-glucose: step 4/4. The polypeptide is Fructose-bisphosphate aldolase, cytoplasmic isozyme (Spinacia oleracea (Spinach)).